A 96-amino-acid polypeptide reads, in one-letter code: CRISPR-associated endoribonuclease Cas2 1 (96 aa).

D8 provides a ligand contact to Mg(2+).

Belongs to the CRISPR-associated endoribonuclease Cas2 protein family. As to quaternary structure, homodimer, forms a heterotetramer with a Cas1 homodimer. Mg(2+) serves as cofactor.

Its function is as follows. CRISPR (clustered regularly interspaced short palindromic repeat), is an adaptive immune system that provides protection against mobile genetic elements (viruses, transposable elements and conjugative plasmids). CRISPR clusters contain sequences complementary to antecedent mobile elements and target invading nucleic acids. CRISPR clusters are transcribed and processed into CRISPR RNA (crRNA). Functions as a ssRNA-specific endoribonuclease. Involved in the integration of spacer DNA into the CRISPR cassette. The sequence is that of CRISPR-associated endoribonuclease Cas2 1 from Moorella thermoacetica (strain ATCC 39073 / JCM 9320).